The sequence spans 166 residues: Probable protein tyrosine phosphatase type IVA A (166 aa).

The region spanning 10-164 is the Tyrosine-protein phosphatase domain; the sequence is NPASLVESST…YKSKKKSSCR (155 aa). Cysteine 52 and cysteine 107 are joined by a disulfide. Aspartate 75 (proton donor) is an active-site residue. The Phosphocysteine intermediate role is filled by cysteine 107. A phosphate-binding site is contributed by 108 to 113; that stretch reads VAGLGR. Arginine 113 contributes to the substrate binding site. Cysteine 163 is modified (cysteine methyl ester). Cysteine 163 carries the S-farnesyl cysteine lipid modification. Residues 164–166 constitute a propeptide, removed in mature form; the sequence is RIM.

Belongs to the protein-tyrosine phosphatase family.

Its subcellular location is the membrane. The enzyme catalyses O-phospho-L-tyrosyl-[protein] + H2O = L-tyrosyl-[protein] + phosphate. The sequence is that of Probable protein tyrosine phosphatase type IVA A from Dictyostelium discoideum (Social amoeba).